We begin with the raw amino-acid sequence, 449 residues long: Hyaluronidase-1 (449 aa).

The N-terminal stretch at 1–23 (MYHIWIKFLAAWIFLKRFNGVHV) is a signal peptide. 2 disulfide bridges follow: Cys-47–Cys-340 and Cys-211–Cys-227. N-linked (GlcNAc...) asparagine glycosylation is found at Asn-67, Asn-103, and Asn-111. The Proton donor role is filled by Glu-135. Asn-153 carries an N-linked (GlcNAc...) asparagine glycan. Residue Asn-357 is glycosylated (N-linked (GlcNAc...) asparagine). Disulfide bonds link Cys-365–Cys-376, Cys-370–Cys-427, and Cys-429–Cys-438. N-linked (GlcNAc...) asparagine glycosylation is present at Asn-401. Residues 427–438 (CQCYQGWKGLYC) form the EGF-like domain.

It belongs to the glycosyl hydrolase 56 family. In terms of assembly, monomer. In terms of tissue distribution, expressed by the venom gland.

The protein resides in the secreted. It catalyses the reaction Random hydrolysis of (1-&gt;4)-linkages between N-acetyl-beta-D-glucosamine and D-glucuronate residues in hyaluronate.. Snake venom endo-hyaluronidase that degrades hyaluronan to smaller oligosaccharide fragments. In venom, it is not toxic by itself, but increases the diffusion of other venom proteins by degrading the extracellular matrix. In addition, it displays antiedematogenic activity. This chain is Hyaluronidase-1, found in Cerastes cerastes (Horned desert viper).